A 299-amino-acid chain; its full sequence is Probable lipid kinase YegS (299 aa).

The 132-residue stretch at 2 to 133 (ANFPASLLIL…IDMARVNDKT (132 aa)) folds into the DAGKc domain. ATP contacts are provided by residues threonine 40, 66–72 (GDGTINE), and threonine 95. The Mg(2+) site is built by leucine 215, aspartate 218, and leucine 220. Catalysis depends on glutamate 271, which acts as the Proton acceptor.

This sequence belongs to the diacylglycerol/lipid kinase family. YegS lipid kinase subfamily. The cofactor is Mg(2+). Ca(2+) is required as a cofactor.

The protein resides in the cytoplasm. Probably phosphorylates lipids; the in vivo substrate is unknown. This Salmonella gallinarum (strain 287/91 / NCTC 13346) protein is Probable lipid kinase YegS.